The sequence spans 171 residues: Large ribosomal subunit protein bL9 (171 aa).

This sequence belongs to the bacterial ribosomal protein bL9 family.

Its function is as follows. Binds to the 23S rRNA. The sequence is that of Large ribosomal subunit protein bL9 from Rickettsia felis (strain ATCC VR-1525 / URRWXCal2) (Rickettsia azadi).